The sequence spans 691 residues: Elongation factor G (691 aa).

Residues 8-283 (EDYRNFGIMA…AVVDYLPSPA (276 aa)) enclose the tr-type G domain. Residues 17 to 24 (AHIDAGKT), 81 to 85 (DTPGH), and 135 to 138 (NKMD) each bind GTP.

This sequence belongs to the TRAFAC class translation factor GTPase superfamily. Classic translation factor GTPase family. EF-G/EF-2 subfamily.

The protein resides in the cytoplasm. In terms of biological role, catalyzes the GTP-dependent ribosomal translocation step during translation elongation. During this step, the ribosome changes from the pre-translocational (PRE) to the post-translocational (POST) state as the newly formed A-site-bound peptidyl-tRNA and P-site-bound deacylated tRNA move to the P and E sites, respectively. Catalyzes the coordinated movement of the two tRNA molecules, the mRNA and conformational changes in the ribosome. The protein is Elongation factor G of Methylobacterium radiotolerans (strain ATCC 27329 / DSM 1819 / JCM 2831 / NBRC 15690 / NCIMB 10815 / 0-1).